Consider the following 159-residue polypeptide: Phosphopantetheine adenylyltransferase (159 aa).

T10 is a binding site for substrate. ATP is bound by residues 10-11 (TF) and H18. Positions 42, 74, and 88 each coordinate substrate. ATP-binding positions include 89-91 (GLR), E99, and 124-130 (WSFISSS).

Belongs to the bacterial CoaD family. In terms of assembly, homohexamer. Requires Mg(2+) as cofactor.

It localises to the cytoplasm. It carries out the reaction (R)-4'-phosphopantetheine + ATP + H(+) = 3'-dephospho-CoA + diphosphate. It participates in cofactor biosynthesis; coenzyme A biosynthesis; CoA from (R)-pantothenate: step 4/5. Functionally, reversibly transfers an adenylyl group from ATP to 4'-phosphopantetheine, yielding dephospho-CoA (dPCoA) and pyrophosphate. The sequence is that of Phosphopantetheine adenylyltransferase from Shigella dysenteriae serotype 1 (strain Sd197).